Here is a 339-residue protein sequence, read N- to C-terminus: MSAIILGIESSCDDTSAAVIKDGYLLSNVVSSQAVHEAYGGVVPELASRAHQQNIVPVVHEALKRAGVTKEELSAVAFTRGPGLMGSLLVGVSFAKGFARSLGIPLIDVNHLTGHVLAHFIKAEGEENIQPKFPFLCLLVSGGNSQIILVKAYNDMEILGQTIDDAAGEAIDKCSKVMGLGYPGGPIIDKLARQGNPKAYTFSKPHIPGLDYSFSGLKTSFLYSLRDWMKDDPDFIEHHKVDLAASLEATVVDILMDKLRKAAKEYKIKEVAVAGGVSANNGLRNSFREHAEKYGWNIFIPKFSYTTDNAAMIAITGYFKYLDKDFCSIDLPAYSRVTL.

His-111 and His-115 together coordinate Fe cation. Residues 139 to 143 (LVSGG), Asp-172, Gly-185, Asp-189, and Asn-280 each bind substrate. Asp-308 provides a ligand contact to Fe cation.

The protein belongs to the KAE1 / TsaD family. Fe(2+) is required as a cofactor.

The protein resides in the cytoplasm. The catalysed reaction is L-threonylcarbamoyladenylate + adenosine(37) in tRNA = N(6)-L-threonylcarbamoyladenosine(37) in tRNA + AMP + H(+). In terms of biological role, required for the formation of a threonylcarbamoyl group on adenosine at position 37 (t(6)A37) in tRNAs that read codons beginning with adenine. Is involved in the transfer of the threonylcarbamoyl moiety of threonylcarbamoyl-AMP (TC-AMP) to the N6 group of A37, together with TsaE and TsaB. TsaD likely plays a direct catalytic role in this reaction. This chain is tRNA N6-adenosine threonylcarbamoyltransferase, found in Bacteroides thetaiotaomicron (strain ATCC 29148 / DSM 2079 / JCM 5827 / CCUG 10774 / NCTC 10582 / VPI-5482 / E50).